The chain runs to 319 residues: Myoblast determination protein 1 (319 aa).

Met-1 is covalently cross-linked (Peptide (Met-Gly) (interchain with G-Cter in ubiquitin)). N6-methyllysine; by EHMT2 is present on Lys-104. A bHLH domain is found at 109-160; the sequence is DRRKAATMRERRRLSKVNEAFETLKRCTSSNPNQRLPKVEILRNAIRYIEGL. Disordered stretches follow at residues 174–221 and 266–319; these read AAAA…SGAR and APAL…YQVL. Composition is skewed to polar residues over residues 197 to 207 and 308 to 319; these read SDASSPRSNCS and ASANPNPIYQVL.

In terms of assembly, efficient DNA binding requires dimerization with another bHLH protein. Seems to form active heterodimers with ITF-2. Interacts with SUV39H1. Interacts with DDX5. Interacts with CHD2. Interacts with TSC22D3. Interacts with SETD3. Interacts with P-TEFB complex; promotes the transcriptional activity of MYOD1 through its CDK9-mediated phosphorylation. Interacts with CSRP3. Interacts with NUPR1. Phosphorylated by CDK9. This phosphorylation promotes its function in muscle differentiation. In terms of processing, acetylated by a complex containing EP300 and PCAF. The acetylation is essential to activate target genes. Conversely, its deacetylation by SIRT1 inhibits its function. Post-translationally, ubiquitinated on the N-terminus; which is required for proteasomal degradation. Methylation at Lys-104 by EHMT2/G9a inhibits myogenic activity.

Its subcellular location is the nucleus. Acts as a transcriptional activator that promotes transcription of muscle-specific target genes and plays a role in muscle differentiation. Together with MYF5 and MYOG, co-occupies muscle-specific gene promoter core region during myogenesis. Induces fibroblasts to differentiate into myoblasts. Interacts with and is inhibited by the twist protein. This interaction probably involves the basic domains of both proteins. In Sus scrofa (Pig), this protein is Myoblast determination protein 1 (MYOD1).